We begin with the raw amino-acid sequence, 444 residues long: Tubulin beta-9 chain (444 aa).

Residues Gln11, Glu69, Ser138, Gly142, Thr143, Gly144, Asn204, and Asn226 each coordinate GTP. Glu69 contributes to the Mg(2+) binding site.

Belongs to the tubulin family. In terms of assembly, dimer of alpha and beta chains. A typical microtubule is a hollow water-filled tube with an outer diameter of 25 nm and an inner diameter of 15 nM. Alpha-beta heterodimers associate head-to-tail to form protofilaments running lengthwise along the microtubule wall with the beta-tubulin subunit facing the microtubule plus end conferring a structural polarity. Microtubules usually have 13 protofilaments but different protofilament numbers can be found in some organisms and specialized cells. Interacts with TFCA. Requires Mg(2+) as cofactor.

It localises to the cytoplasm. Its subcellular location is the cytoskeleton. Tubulin is the major constituent of microtubules, a cylinder consisting of laterally associated linear protofilaments composed of alpha- and beta-tubulin heterodimers. Microtubules grow by the addition of GTP-tubulin dimers to the microtubule end, where a stabilizing cap forms. Below the cap, tubulin dimers are in GDP-bound state, owing to GTPase activity of alpha-tubulin. The sequence is that of Tubulin beta-9 chain (TUBB9) from Arabidopsis thaliana (Mouse-ear cress).